Here is a 547-residue protein sequence, read N- to C-terminus: Methionine--tRNA ligase (547 aa).

A 'HIGH' region motif is present at residues 15 to 25 (PYANGSIHIGH). Zn(2+) contacts are provided by Cys-146, Cys-149, Cys-159, and Cys-162. The 'KMSKS' region signature appears at 332-336 (KLSKS). Residue Lys-335 coordinates ATP.

The protein belongs to the class-I aminoacyl-tRNA synthetase family. MetG type 1 subfamily. As to quaternary structure, monomer. Zn(2+) is required as a cofactor.

The protein resides in the cytoplasm. It carries out the reaction tRNA(Met) + L-methionine + ATP = L-methionyl-tRNA(Met) + AMP + diphosphate. Functionally, is required not only for elongation of protein synthesis but also for the initiation of all mRNA translation through initiator tRNA(fMet) aminoacylation. This Buchnera aphidicola subsp. Acyrthosiphon pisum (strain APS) (Acyrthosiphon pisum symbiotic bacterium) protein is Methionine--tRNA ligase (metG).